The following is a 272-amino-acid chain: Tryptophan synthase alpha chain (272 aa).

Catalysis depends on proton acceptor residues Glu53 and Asp64.

This sequence belongs to the TrpA family. As to quaternary structure, tetramer of two alpha and two beta chains.

It catalyses the reaction (1S,2R)-1-C-(indol-3-yl)glycerol 3-phosphate + L-serine = D-glyceraldehyde 3-phosphate + L-tryptophan + H2O. It participates in amino-acid biosynthesis; L-tryptophan biosynthesis; L-tryptophan from chorismate: step 5/5. Functionally, the alpha subunit is responsible for the aldol cleavage of indoleglycerol phosphate to indole and glyceraldehyde 3-phosphate. The protein is Tryptophan synthase alpha chain of Xanthomonas campestris pv. campestris (strain B100).